Here is a 598-residue protein sequence, read N- to C-terminus: NADH-quinone oxidoreductase subunit C/D (598 aa).

Residues 1–189 form an NADH dehydrogenase I subunit C region; the sequence is MTDLTTSDST…DPFVLTKQKE (189 aa). Residues 213 to 598 are NADH dehydrogenase I subunit D; the sequence is DFMFLNLGPN…IDFVMSDVDR (386 aa).

The protein in the N-terminal section; belongs to the complex I 30 kDa subunit family. It in the C-terminal section; belongs to the complex I 49 kDa subunit family. As to quaternary structure, NDH-1 is composed of 13 different subunits. Subunits NuoB, CD, E, F, and G constitute the peripheral sector of the complex.

The protein localises to the cell inner membrane. The enzyme catalyses a quinone + NADH + 5 H(+)(in) = a quinol + NAD(+) + 4 H(+)(out). In terms of biological role, NDH-1 shuttles electrons from NADH, via FMN and iron-sulfur (Fe-S) centers, to quinones in the respiratory chain. The immediate electron acceptor for the enzyme in this species is believed to be ubiquinone. Couples the redox reaction to proton translocation (for every two electrons transferred, four hydrogen ions are translocated across the cytoplasmic membrane), and thus conserves the redox energy in a proton gradient. This Yersinia enterocolitica serotype O:8 / biotype 1B (strain NCTC 13174 / 8081) protein is NADH-quinone oxidoreductase subunit C/D.